An 85-amino-acid chain; its full sequence is ATP synthase subunit c (85 aa).

2 consecutive transmembrane segments (helical) span residues 22–39 and 65–85; these read AIGA…IGKI and AALI…VFFL.

The protein belongs to the ATPase C chain family. F-type ATPases have 2 components, F(1) - the catalytic core - and F(0) - the membrane proton channel. F(1) has five subunits: alpha(3), beta(3), gamma(1), delta(1), epsilon(1). F(0) has three main subunits: a(1), b(2) and c(10-14). The alpha and beta chains form an alternating ring which encloses part of the gamma chain. F(1) is attached to F(0) by a central stalk formed by the gamma and epsilon chains, while a peripheral stalk is formed by the delta and b chains.

The protein localises to the cell inner membrane. Its function is as follows. F(1)F(0) ATP synthase produces ATP from ADP in the presence of a proton or sodium gradient. F-type ATPases consist of two structural domains, F(1) containing the extramembraneous catalytic core and F(0) containing the membrane proton channel, linked together by a central stalk and a peripheral stalk. During catalysis, ATP synthesis in the catalytic domain of F(1) is coupled via a rotary mechanism of the central stalk subunits to proton translocation. In terms of biological role, key component of the F(0) channel; it plays a direct role in translocation across the membrane. A homomeric c-ring of between 10-14 subunits forms the central stalk rotor element with the F(1) delta and epsilon subunits. The protein is ATP synthase subunit c of Bacteroides thetaiotaomicron (strain ATCC 29148 / DSM 2079 / JCM 5827 / CCUG 10774 / NCTC 10582 / VPI-5482 / E50).